A 541-amino-acid chain; its full sequence is Atlastin-3 (541 aa).

Positions Met-1 to Gly-22 are disordered. The N-terminal hypervariable region (HVR) stretch occupies residues Met-1 to Gly-25. Residues Met-1–Ala-445 are Cytoplasmic-facing. The GB1/RHD3-type G domain maps to Asp-57–Lys-306. 7 residues coordinate GDP: Arg-70, Lys-71, Gly-72, Lys-73, Ser-74, Phe-75, and Arg-109. Asp-142 is a binding site for Mg(2+). GDP contacts are provided by Arg-213, Asp-214, Val-272, and Ser-275. The 3HB (three-helix bundle) domain stretch occupies residues Met-344 to Ser-434. N6-acetyllysine is present on Lys-391. The chain crosses the membrane as a helical span at residues Val-446–Leu-466. Glu-467 is a topological domain (lumenal). The helical transmembrane segment at Val-468 to Gly-488 threads the bilayer. At Tyr-489–Gln-541 the chain is on the cytoplasmic side.

It belongs to the TRAFAC class dynamin-like GTPase superfamily. GB1/RHD3 GTPase family. GB1 subfamily. As to quaternary structure, monomeric and homodimeric. The homodimer, transiently formed by two molecules on opposing membranes, is the active form mediating ER membrane fusion. Interacts with ZFYVE27; both proteins are involved in endoplasmic reticulum tubular network organization. Interacts with REEP5; both proteins are involved in endoplasmic reticulum tubular network organization.

Its subcellular location is the endoplasmic reticulum membrane. The catalysed reaction is GTP + H2O = GDP + phosphate + H(+). Functionally, atlastin-3 (ATL3) is a membrane-anchored GTPase that mediates the GTP-dependent fusion of endoplasmic reticulum (ER) membranes, maintaining the continuous ER network. It facilitates the formation of three-way junctions where ER tubules intersect. Two atlastin-3 on neighboring ER tubules bind GTP and form loose homodimers through the GB1/RHD3-type G domains and 3HB regions. Upon GTP hydrolysis, the 3HB regions tighten, pulling the membranes together to drive their fusion. After fusion, the homodimer disassembles upon release of inorganic phosphate (Pi). Subsequently, GDP dissociates, resetting the monomers to a conformation ready for a new fusion cycle. This Rattus norvegicus (Rat) protein is Atlastin-3.